The sequence spans 1167 residues: Nucleolar protein 8 (1167 aa).

The RRM domain maps to Lys8–Glu89. The disordered stretch occupies residues Val223–Ser304. Lys225 is covalently cross-linked (Glycyl lysine isopeptide (Lys-Gly) (interchain with G-Cter in SUMO2)). A compositionally biased stretch (polar residues) spans Leu248 to Thr275. Ser268 and Ser298 each carry phosphoserine. Thr302 is modified (phosphothreonine). Ser304 is modified (phosphoserine). Residue Lys314 forms a Glycyl lysine isopeptide (Lys-Gly) (interchain with G-Cter in SUMO2) linkage. Phosphoserine is present on residues Ser331 and Ser365. A Phosphotyrosine modification is found at Tyr376. The residue at position 378 (Ser378) is a Phosphoserine. Thr381 carries the post-translational modification Phosphothreonine. A Phosphoserine modification is found at Ser432. Disordered stretches follow at residues Glu435–Gly470, Leu499–Arg533, Lys590–Leu908, Asn932–Leu982, and Tyr1006–Glu1026. Over residues Glu457–Gly470 the composition is skewed to acidic residues. The segment covering Val501–Gly510 has biased composition (basic and acidic residues). The segment covering Asn640–Glu652 has biased composition (polar residues). Positions Ser653 to Ser668 are enriched in basic and acidic residues. At Ser723 the chain carries Phosphoserine. Residues Ser727 to Thr736 are compositionally biased toward basic and acidic residues. The segment covering Phe738 to Val748 has biased composition (polar residues). Over residues Ser749–Lys776 the composition is skewed to basic and acidic residues. A coiled-coil region spans residues Lys753 to Val779. Phosphothreonine is present on Thr795. Residue Ser801 is modified to Phosphoserine. Positions His817–Met827 are enriched in basic and acidic residues. A phosphoserine mark is found at Ser837, Ser838, Ser843, and Ser845. Over residues Ser837–Asp847 the composition is skewed to acidic residues. Positions Gly874–Glu887 are enriched in basic and acidic residues. A coiled-coil region spans residues Leu886–Gln924. Residue Thr888 is modified to Phosphothreonine. Ser890 is modified (phosphoserine). Basic and acidic residues-rich tracts occupy residues Lys940 to Ser968 and Thr1007 to Glu1026. A Phosphoserine modification is found at Ser1036. Lys1057 is covalently cross-linked (Glycyl lysine isopeptide (Lys-Gly) (interchain with G-Cter in SUMO2)). Disordered stretches follow at residues Ile1071–Leu1105 and Arg1145–Lys1167. A phosphoserine mark is found at Ser1082, Ser1083, Ser1084, and Ser1099. A compositionally biased stretch (basic residues) spans Cys1153 to Lys1167.

In terms of assembly, interacts with the GTP form of RRAGA, RRAGC and RRAGD. Interacts with NIP7. Interacts with DDX18; the interaction is RNA-dependent. Interacts with DDX47; the interaction is RNA-dependent. In terms of processing, phosphorylated. In terms of tissue distribution, expressed in various diffuse-type gastric cancers. Detected at lower levels in skeletal muscle.

It is found in the nucleus. The protein localises to the nucleolus. In terms of biological role, plays an essential role in the survival of diffuse-type gastric cancer cells. Acts as a nucleolar anchoring protein for DDX47. May be involved in regulation of gene expression at the post-transcriptional level or in ribosome biogenesis in cancer cells. The protein is Nucleolar protein 8 of Homo sapiens (Human).